Here is a 454-residue protein sequence, read N- to C-terminus: Tryptophanase (454 aa).

Lysine 256 is subject to N6-(pyridoxal phosphate)lysine.

This sequence belongs to the beta-eliminating lyase family. Homotetramer. It depends on pyridoxal 5'-phosphate as a cofactor.

It carries out the reaction L-tryptophan + H2O = indole + pyruvate + NH4(+). It functions in the pathway amino-acid degradation; L-tryptophan degradation via pyruvate pathway; indole and pyruvate from L-tryptophan: step 1/1. This Hyphomonas neptunium (strain ATCC 15444) protein is Tryptophanase.